The chain runs to 424 residues: Dihydrolipoyllysine-residue succinyltransferase component of 2-oxoglutarate dehydrogenase complex (424 aa).

The Lipoyl-binding domain maps to 1–76 (MPEVKVPELA…EVGQAIAVVG (76 aa)). Lys-42 is subject to N6-lipoyllysine. Disordered stretches follow at residues 76–138 (GEGS…KYAR) and 155–204 (VRKE…RKKT). The span at 91–105 (EAPKQETETSTDDKS) shows a compositional bias: basic and acidic residues. The segment covering 122 to 131 (DNNQRVNATP) has biased composition (polar residues). A Peripheral subunit-binding (PSBD) domain is found at 128–164 (NATPSARKYAREKGIDLSEIAAASNDVVRKEHVDQSQ). Low complexity predominate over residues 162-176 (QSQTQTSTQQQAQPA). Active-site residues include His-395 and Asp-399.

This sequence belongs to the 2-oxoacid dehydrogenase family. Forms a 24-polypeptide structural core with octahedral symmetry. Part of the 2-oxoglutarate dehydrogenase (OGDH) complex composed of E1 (2-oxoglutarate dehydrogenase), E2 (dihydrolipoamide succinyltransferase) and E3 (dihydrolipoamide dehydrogenase); the complex contains multiple copies of the three enzymatic components (E1, E2 and E3). (R)-lipoate serves as cofactor.

It catalyses the reaction N(6)-[(R)-dihydrolipoyl]-L-lysyl-[protein] + succinyl-CoA = N(6)-[(R)-S(8)-succinyldihydrolipoyl]-L-lysyl-[protein] + CoA. The protein operates within amino-acid degradation; L-lysine degradation via saccharopine pathway; glutaryl-CoA from L-lysine: step 6/6. Its function is as follows. E2 component of the 2-oxoglutarate dehydrogenase (OGDH) complex which catalyzes the second step in the conversion of 2-oxoglutarate to succinyl-CoA and CO(2). This chain is Dihydrolipoyllysine-residue succinyltransferase component of 2-oxoglutarate dehydrogenase complex (odhB), found in Staphylococcus saprophyticus subsp. saprophyticus (strain ATCC 15305 / DSM 20229 / NCIMB 8711 / NCTC 7292 / S-41).